A 188-amino-acid chain; its full sequence is Putative nucleotidase OB0422 (188 aa).

Belongs to the 5'(3')-deoxyribonucleotidase family.

The sequence is that of Putative nucleotidase OB0422 from Oceanobacillus iheyensis (strain DSM 14371 / CIP 107618 / JCM 11309 / KCTC 3954 / HTE831).